The following is a 736-amino-acid chain: Peroxisomal multifunctional enzyme type 2 (736 aa).

The tract at residues 1 to 305 is (3R)-hydroxyacyl-CoA dehydrogenase; sequence MGSPLRFDGR…IEVLSKIDSE (305 aa). NAD(+) contacts are provided by residues 13 to 37, leucine 21, and aspartate 40; that span reads LVTG…ALVV. Lysine 46 carries the N6-acetyllysine; alternate modification. Lysine 46 carries the N6-succinyllysine; alternate modification. Serine 52 is modified (phosphoserine). An N6-succinyllysine mark is found at lysine 57 and lysine 68. An NAD(+)-binding site is contributed by 75–76; sequence SV. Lysine 84 carries the post-translational modification N6-succinyllysine. Asparagine 99 serves as a coordination point for NAD(+). Serine 151 is a substrate binding site. The active-site Proton acceptor is the tyrosine 164. Residues 164–168 and 196–199 contribute to the NAD(+) site; these read YSAAK and AGSR. Threonine 265 is subject to Phosphothreonine. N6-succinyllysine is present on lysine 275. A phosphoserine mark is found at serine 304 and serine 309. The tract at residues 322-622 is enoyl-CoA hydratase 2; it reads SGFAGAIGQK…AKTPSEGGKL (301 aa). Lysine 356 carries the N6-succinyllysine modification. 406–407 contacts (3R)-3-hydroxydecanoyl-CoA; sequence HG. Position 424 is an N6-succinyllysine (lysine 424). Residues lysine 435, 510 to 515, glycine 533, and phenylalanine 563 contribute to the (3R)-3-hydroxydecanoyl-CoA site; that span reads DWNPLH. One can recognise a MaoC-like domain in the interval 484 to 600; the sequence is IPNRPPDAVL…QETGDIVISN (117 aa). Lysine 565 is modified (N6-acetyllysine). N6-succinyllysine is present on residues lysine 579 and lysine 663. The SCP2 domain occupies 624-736; that stretch reads STFVFEEIGR…QMILKDYAKL (113 aa). The residue at position 669 (lysine 669) is an N6-acetyllysine. Glutamine 706 serves as a coordination point for substrate. Residue lysine 707 is modified to N6-acetyllysine. Glutamine 724 is a binding site for substrate. N6-succinyllysine is present on lysine 725. Residues 734 to 736 carry the Microbody targeting signal motif; it reads AKL.

This sequence belongs to the short-chain dehydrogenases/reductases (SDR) family. In terms of assembly, homodimer. As to expression, present in many tissues with highest concentrations in liver, heart, prostate and testis.

The protein resides in the peroxisome. The enzyme catalyses a (3R)-3-hydroxyacyl-CoA + NAD(+) = a 3-oxoacyl-CoA + NADH + H(+). The catalysed reaction is a (3R)-3-hydroxyacyl-CoA = a (2E)-enoyl-CoA + H2O. It carries out the reaction (24R,25R)-3alpha,7alpha,12alpha,24-tetrahydroxy-5beta-cholestan-26-oyl-CoA = (24E)-3alpha,7alpha,12alpha-trihydroxy-5beta-cholest-24-en-26-oyl-CoA + H2O. It catalyses the reaction (2E)-octenoyl-CoA + H2O = (3R)-hydroxyoctanoyl-CoA. The enzyme catalyses (3R)-hydroxyoctanoyl-CoA + NAD(+) = 3-oxooctanoyl-CoA + NADH + H(+). The catalysed reaction is (3R)-hydroxyhexadecanoyl-CoA + NAD(+) = 3-oxohexadecanoyl-CoA + NADH + H(+). It carries out the reaction (2E)-hexadecenedioyl-CoA + H2O = (3R)-hydroxyhexadecanedioyl-CoA. It catalyses the reaction (3R)-hydroxyhexadecanedioyl-CoA + NAD(+) = 3-oxohexadecanedioyl-CoA + NADH + H(+). The enzyme catalyses (3R)-hydroxyhexadecanoyl-CoA = (2E)-hexadecenoyl-CoA + H2O. The catalysed reaction is (3R)-3-hydroxydecanoyl-CoA = (2E)-decenoyl-CoA + H2O. It carries out the reaction (3R)-3-hydroxydecanoyl-CoA + NAD(+) = 3-oxodecanoyl-CoA + NADH + H(+). It catalyses the reaction (24R,25R)-3alpha,7alpha,12alpha,24-tetrahydroxy-5beta-cholestan-26-oyl-CoA + NAD(+) = 3alpha,7alpha,12alpha-trihydroxy-24-oxo-5beta-cholestan-26-oyl-CoA + NADH + H(+). The protein operates within lipid metabolism; fatty acid beta-oxidation. Functionally, bifunctional enzyme acting on the peroxisomal fatty acid beta-oxidation pathway. Catalyzes two of the four reactions in fatty acid degradation: hydration of 2-enoyl-CoA (trans-2-enoyl-CoA) to produce (3R)-3-hydroxyacyl-CoA, and dehydrogenation of (3R)-3-hydroxyacyl-CoA to produce 3-ketoacyl-CoA (3-oxoacyl-CoA), which is further metabolized by SCPx. Can use straight-chain and branched-chain fatty acids, as well as bile acid intermediates as substrates. The polypeptide is Peroxisomal multifunctional enzyme type 2 (Homo sapiens (Human)).